Reading from the N-terminus, the 180-residue chain is Large ribosomal subunit protein uL15 (180 aa).

Residues 1-62 are disordered; sequence MKKERLEQAA…KTAGRGSKGQ (62 aa). The segment covering 35-44 has biased composition (basic residues); sequence GAKKEKKRVG.

Belongs to the universal ribosomal protein uL15 family. In terms of assembly, part of the 50S ribosomal subunit.

Binds to the 23S rRNA. The polypeptide is Large ribosomal subunit protein uL15 (Leptospira borgpetersenii serovar Hardjo-bovis (strain JB197)).